The primary structure comprises 264 residues: ATP synthase subunit b 1 (264 aa).

The chain crosses the membrane as a helical span at residues 2–22 (LFDWFTFWAQLLNFLILVWLL). The tract at residues 240-264 (ASSALLDGPDDEMNEEEGHAGKDAD) is disordered. The span at 255–264 (EEGHAGKDAD) shows a compositional bias: basic and acidic residues.

Belongs to the ATPase B chain family. As to quaternary structure, F-type ATPases have 2 components, F(1) - the catalytic core - and F(0) - the membrane proton channel. F(1) has five subunits: alpha(3), beta(3), gamma(1), delta(1), epsilon(1). F(0) has four main subunits: a(1), b(2) and c(10-14). The alpha and beta chains form an alternating ring which encloses part of the gamma chain. F(1) is attached to F(0) by a central stalk formed by the gamma and epsilon chains, while a peripheral stalk is formed by the delta and b chains.

The protein resides in the cell inner membrane. In terms of biological role, f(1)F(0) ATP synthase produces ATP from ADP in the presence of a proton or sodium gradient. F-type ATPases consist of two structural domains, F(1) containing the extramembraneous catalytic core and F(0) containing the membrane proton channel, linked together by a central stalk and a peripheral stalk. During catalysis, ATP synthesis in the catalytic domain of F(1) is coupled via a rotary mechanism of the central stalk subunits to proton translocation. Its function is as follows. Component of the F(0) channel, it forms part of the peripheral stalk, linking F(1) to F(0). This chain is ATP synthase subunit b 1, found in Chlorobium luteolum (strain DSM 273 / BCRC 81028 / 2530) (Pelodictyon luteolum).